A 1089-amino-acid chain; its full sequence is Electroneutral sodium bicarbonate exchanger 1 (1089 aa).

The Extracellular portion of the chain corresponds to 1 to 476 (MPAGSNEPDG…DYRDALSLQC (476 aa)). A disordered region spans residues 55–90 (LGRQSHRHHRTHGQKHRRRGGRGKGASQGEEGLEAL). The span at 58-76 (QSHRHHRTHGQKHRRRGGR) shows a compositional bias: basic residues. The helical transmembrane segment at 477–497 (LASFLFLYCACMSPVITFGGL) threads the bilayer. At 498 to 505 (LGEATEGR) the chain is on the cytoplasmic side. A helical membrane pass occupies residues 506–526 (ISAIESLFGASMTGIAYSLFA). Residues 527–563 (GQPLTILGSTGPVLVFEKILFKFCKDYALSYLSLRAL) are Extracellular-facing. Residues 564–584 (IGLWTAFLCIVLVATDASSLV) traverse the membrane as a helical segment. Topologically, residues 585–593 (CYITRFTEE) are cytoplasmic. The chain crosses the membrane as a helical span at residues 594 to 614 (AFASLICIIFIYEAIEKLIHL). At 615–685 (AETYPIHMHS…EFMGSACGHH (71 aa)) the chain is on the extracellular side. Disulfide bonds link Cys634–Cys682 and Cys636–Cys670. An N-linked (GlcNAc) asparagine glycan is attached at Asn644. A helical membrane pass occupies residues 686–706 (GPYTPDVLFWSCILFFATFIV). The Cytoplasmic portion of the chain corresponds to 707-729 (SSTLKTFKTSRYFPTRVRSMVSD). The chain crosses the membrane as a helical span at residues 730-750 (FAVFLTIFTMVVLDFLIGVPS). At 751 to 776 (PKLQVPNVFKPTRDDRGWFINPIGPN) the chain is on the extracellular side. A helical transmembrane segment spans residues 777–797 (PWWTVIAAIIPALLCTILIFM). The Cytoplasmic segment spans residues 798-822 (DQQITAVIINRKEHKLKKGCGYHLD). A helical transmembrane segment spans residues 823–843 (LLMVAVMLGVCSIMGLPWFVA). The Extracellular portion of the chain corresponds to 844-879 (ATVLSITHVNSLKLESECSAPGEQPKFLGIREQRVT). The chain crosses the membrane as a helical span at residues 880-900 (GLMIFVLMGCSVFMTAVLKFI). The Cytoplasmic segment spans residues 901-902 (PM). A helical transmembrane segment spans residues 903–923 (PVLYGVFLYMGVSSLQGIQFF). Topologically, residues 924–960 (DRLKLFGMPAKHQPDFIYLRHVPLRKVHLFTLVQLTC) are extracellular. Residues 961–981 (LVLLWVIKASPAAIVFPMMVL) traverse the membrane as a helical segment. Residues 982 to 1089 (ALVFVRKVMD…GNTKEKSPFN (108 aa)) are Cytoplasmic-facing.

This sequence belongs to the anion exchanger (TC 2.A.31) family. As to quaternary structure, homodimer. In terms of tissue distribution, expressed in the hippocampal neurons (at protein level). Highly expressed in brain with lower levels in lung, kidney and heart. In the kidney, there is high expression in the inner medulla, localized to the inner medullary collecting duct. In the brain, there seems to be three transcripts each having a different expression pattern. The smaller 3kb transcript has highest expression levels in the thalamus and the largest 9.5kb transcript has highest levels in the substantia nigra. The middle transcript of 4.4kb, which is also the main transcript in kidney, is highly expressed in thalamus. Hence, the highest levels are observed in the thalamus, amygdala and caudate nucleus and very low expression was seen in the corpus callosum.

The protein localises to the cell membrane. It is found in the apical cell membrane. Its subcellular location is the basolateral cell membrane. It localises to the cytoplasmic vesicle. The protein resides in the secretory vesicle. The protein localises to the synaptic vesicle membrane. It catalyses the reaction 2 hydrogencarbonate(out) + chloride(in) + Na(+)(out) = 2 hydrogencarbonate(in) + chloride(out) + Na(+)(in). Its function is as follows. Mediates electroneutral sodium- and carbonate-dependent chloride-HCO3(-) exchange with a Na(+):HCO3(-) stoichiometry of 2:1. Plays a major role in pH regulation in neurons. Mediates sodium reabsorption in the renal cortical collecting ducts. This is Electroneutral sodium bicarbonate exchanger 1 from Mus musculus (Mouse).